Here is a 111-residue protein sequence, read N- to C-terminus: Large ribosomal subunit protein eL30 (111 aa).

This sequence belongs to the eukaryotic ribosomal protein eL30 family.

This is Large ribosomal subunit protein eL30 (RPL30) from Oryza sativa subsp. japonica (Rice).